The primary structure comprises 735 residues: E3 UFM1-protein ligase 1 homolog (735 aa).

Residues 389-445 (RLEAEKKKQGGAKAAVKVQEETDDWGDGKKGGKGGKKNAKSVKGGSKSSAPSTSSNL) form a disordered region. A compositionally biased stretch (basic residues) spans 419-428 (GGKGGKKNAK). Residues 429-445 (SVKGGSKSSAPSTSSNL) show a composition bias toward low complexity.

This sequence belongs to the UFL1 family.

Its function is as follows. E3 UFM1-protein ligase that mediates ufmylation of target proteins. This is E3 UFM1-protein ligase 1 homolog (ufl-1) from Caenorhabditis elegans.